The following is a 399-amino-acid chain: 4-hydroxy-3-methylbut-2-enyl diphosphate reductase (399 aa).

C66 serves as a coordination point for [4Fe-4S] cluster. H96 is a (2E)-4-hydroxy-3-methylbut-2-enyl diphosphate binding site. H96 provides a ligand contact to dimethylallyl diphosphate. H96 lines the isopentenyl diphosphate pocket. C157 contacts [4Fe-4S] cluster. H185 provides a ligand contact to (2E)-4-hydroxy-3-methylbut-2-enyl diphosphate. H185 is a dimethylallyl diphosphate binding site. Residue H185 participates in isopentenyl diphosphate binding. The active-site Proton donor is the E187. Position 250 (T250) interacts with (2E)-4-hydroxy-3-methylbut-2-enyl diphosphate. C288 contacts [4Fe-4S] cluster. The (2E)-4-hydroxy-3-methylbut-2-enyl diphosphate site is built by S317, S318, N319, and S380. Residues S317, S318, N319, and S380 each contribute to the dimethylallyl diphosphate site. Residues S317, S318, N319, and S380 each coordinate isopentenyl diphosphate.

The protein belongs to the IspH family. The cofactor is [4Fe-4S] cluster.

It carries out the reaction isopentenyl diphosphate + 2 oxidized [2Fe-2S]-[ferredoxin] + H2O = (2E)-4-hydroxy-3-methylbut-2-enyl diphosphate + 2 reduced [2Fe-2S]-[ferredoxin] + 2 H(+). It catalyses the reaction dimethylallyl diphosphate + 2 oxidized [2Fe-2S]-[ferredoxin] + H2O = (2E)-4-hydroxy-3-methylbut-2-enyl diphosphate + 2 reduced [2Fe-2S]-[ferredoxin] + 2 H(+). Its pathway is isoprenoid biosynthesis; dimethylallyl diphosphate biosynthesis; dimethylallyl diphosphate from (2E)-4-hydroxy-3-methylbutenyl diphosphate: step 1/1. It functions in the pathway isoprenoid biosynthesis; isopentenyl diphosphate biosynthesis via DXP pathway; isopentenyl diphosphate from 1-deoxy-D-xylulose 5-phosphate: step 6/6. In terms of biological role, catalyzes the conversion of 1-hydroxy-2-methyl-2-(E)-butenyl 4-diphosphate (HMBPP) into a mixture of isopentenyl diphosphate (IPP) and dimethylallyl diphosphate (DMAPP). Acts in the terminal step of the DOXP/MEP pathway for isoprenoid precursor biosynthesis. The polypeptide is 4-hydroxy-3-methylbut-2-enyl diphosphate reductase (Parasynechococcus marenigrum (strain WH8102)).